Consider the following 1442-residue polypeptide: Protein patched homolog 1 (1442 aa).

The segment at 1–45 (MASAADALEPESGSSTAGGGSHPVRAARSARGRRRRSGGTRRAAA) is disordered. The Cytoplasmic segment spans residues 1-101 (MASAADALEP…GCYIQKNCGK (101 aa)). Basic residues predominate over residues 28-39 (RSARGRRRRSGG). A helical membrane pass occupies residues 102 to 122 (FLVVGLLYSAFAVGLRAANLE). Topologically, residues 123 to 436 (TNVEELWVEV…LDDILKSFSD (314 aa)) are extracellular. N141, N312, N349, and N414 each carry an N-linked (GlcNAc...) asparagine glycan. A helical transmembrane segment spans residues 437–457 (VSVIRVASGYLLMLAYACLTM). Residues 438 to 598 (SVIRVASGYL…LLIFPAILSM (161 aa)) form the SSD domain. Topologically, residues 458 to 472 (LRWDCAKSQGAVGLA) are cytoplasmic. A helical transmembrane segment spans residues 473-493 (GVLLVALSVAAGLGLCSLIGI). The Extracellular segment spans residues 494–501 (SFNAATTQ). Residues 502–522 (VLPFLALGVGVDDVFLLAHAF) form a helical membrane-spanning segment. Topologically, residues 523-547 (SETGQNKRIPFEDRTGECLKRTGAS) are cytoplasmic. A helical transmembrane segment spans residues 548-568 (VALTSISNVTAFFMAALIPIP). Over 569 to 577 (ALRAFSLQA) the chain is Extracellular. Residues 578-598 (AVVVVFNFAMVLLIFPAILSM) traverse the membrane as a helical segment. At 599 to 747 (DLYRREDRRL…HYAPFLLKPK (149 aa)) the chain is on the cytoplasmic side. Residues 748-768 (AKVVVIFLFLGLLGLSLYGTT) traverse the membrane as a helical segment. Topologically, residues 769-1026 (RVRDGLDLTD…WEQYIGLRHW (258 aa)) are extracellular. N827, N874, and N999 each carry an N-linked (GlcNAc...) asparagine glycan. The helical transmembrane segment at 1027 to 1047 (LLLSISVVLACTFLVCALFLL) threads the bilayer. Residues 1048-1053 (NPWTAG) are Cytoplasmic-facing. Residues 1054–1074 (IIVVVLALMTVELFGMMGLIG) traverse the membrane as a helical segment. Topologically, residues 1075-1082 (IKLSAVPV) are extracellular. The chain crosses the membrane as a helical span at residues 1083–1101 (VILIASVGIGVEFTVHIAL). Over 1102 to 1120 (AFLTAIGDKNRRAVLALEH) the chain is Cytoplasmic. Residues 1121-1141 (MFAPVLDGAVSTLLGVLMLAG) form a helical membrane-spanning segment. At 1142 to 1153 (SEFDFIVRYFFA) the chain is on the extracellular side. The chain crosses the membrane as a helical span at residues 1154–1174 (VLAILTILGVLNGLVLLPVLL). Residues 1175 to 1442 (SFFGPYPEVS…EERTAGKISE (268 aa)) lie on the Cytoplasmic side of the membrane. Disordered stretches follow at residues 1188–1231 (GRNR…TTVS) and 1266–1338 (STVV…LNHK). Over residues 1217–1226 (SDSSDSEYSS) the composition is skewed to low complexity. Residues 1276 to 1293 (QSSPRLQSNPEAGTQQVW) are compositionally biased toward polar residues.

The protein belongs to the patched family. Post-translationally, glycosylation is necessary for SHH binding. Expression is seen in the embryonic neural tube, sclerotome, visceral mesoderm, and limb bud.

It localises to the membrane. Acts as a receptor for sonic hedgehog (SHH), indian hedgehog (IHH) and desert hedgehog (DHH). Associates with the smoothened protein (SMO) to transduce the hedgehog's proteins signal. The chain is Protein patched homolog 1 (PTCH1) from Gallus gallus (Chicken).